The primary structure comprises 172 residues: Large ribosomal subunit protein uL10 (172 aa).

This sequence belongs to the universal ribosomal protein uL10 family. Part of the ribosomal stalk of the 50S ribosomal subunit. The N-terminus interacts with L11 and the large rRNA to form the base of the stalk. The C-terminus forms an elongated spine to which L12 dimers bind in a sequential fashion forming a multimeric L10(L12)X complex.

Its function is as follows. Forms part of the ribosomal stalk, playing a central role in the interaction of the ribosome with GTP-bound translation factors. The polypeptide is Large ribosomal subunit protein uL10 (Brucella suis biovar 1 (strain 1330)).